The sequence spans 156 residues: Ribosomal RNA large subunit methyltransferase H (156 aa).

Residues Leu-73, Gly-104, and 123–128 contribute to the S-adenosyl-L-methionine site; that span reads ISSMTL.

It belongs to the RNA methyltransferase RlmH family. In terms of assembly, homodimer.

Its subcellular location is the cytoplasm. It catalyses the reaction pseudouridine(1915) in 23S rRNA + S-adenosyl-L-methionine = N(3)-methylpseudouridine(1915) in 23S rRNA + S-adenosyl-L-homocysteine + H(+). Specifically methylates the pseudouridine at position 1915 (m3Psi1915) in 23S rRNA. The sequence is that of Ribosomal RNA large subunit methyltransferase H from Burkholderia ambifaria (strain ATCC BAA-244 / DSM 16087 / CCUG 44356 / LMG 19182 / AMMD) (Burkholderia cepacia (strain AMMD)).